A 122-amino-acid polypeptide reads, in one-letter code: Large ribosomal subunit protein uL24 (122 aa).

It belongs to the universal ribosomal protein uL24 family. In terms of assembly, part of the 50S ribosomal subunit.

Its function is as follows. One of two assembly initiator proteins, it binds directly to the 5'-end of the 23S rRNA, where it nucleates assembly of the 50S subunit. One of the proteins that surrounds the polypeptide exit tunnel on the outside of the subunit. This chain is Large ribosomal subunit protein uL24, found in Trichodesmium erythraeum (strain IMS101).